The sequence spans 180 residues: ATP synthase subunit delta (180 aa).

This sequence belongs to the ATPase delta chain family. F-type ATPases have 2 components, F(1) - the catalytic core - and F(0) - the membrane proton channel. F(1) has five subunits: alpha(3), beta(3), gamma(1), delta(1), epsilon(1). F(0) has three main subunits: a(1), b(2) and c(10-14). The alpha and beta chains form an alternating ring which encloses part of the gamma chain. F(1) is attached to F(0) by a central stalk formed by the gamma and epsilon chains, while a peripheral stalk is formed by the delta and b chains.

Its subcellular location is the cell inner membrane. Its function is as follows. F(1)F(0) ATP synthase produces ATP from ADP in the presence of a proton or sodium gradient. F-type ATPases consist of two structural domains, F(1) containing the extramembraneous catalytic core and F(0) containing the membrane proton channel, linked together by a central stalk and a peripheral stalk. During catalysis, ATP synthesis in the catalytic domain of F(1) is coupled via a rotary mechanism of the central stalk subunits to proton translocation. Functionally, this protein is part of the stalk that links CF(0) to CF(1). It either transmits conformational changes from CF(0) to CF(1) or is implicated in proton conduction. This is ATP synthase subunit delta from Acidovorax sp. (strain JS42).